Here is a 295-residue protein sequence, read N- to C-terminus: Myosin light chain kinase A (295 aa).

The region spanning 8–265 (YEFKEELGRG…ATNALNHPWL (258 aa)) is the Protein kinase domain. ATP is bound by residues 14-22 (LGRGAFSIV) and Lys-37. The active-site Proton acceptor is the Asp-130. Phosphothreonine occurs at positions 166 and 289. An autoinhibitory domain region spans residues 264-295 (WLKSNNSNNTIDTVKMKEYIVERQKTQTKLVN).

Belongs to the protein kinase superfamily. CAMK Ser/Thr protein kinase family. CaMK subfamily. Autophosphorylated. Transiently phosphorylated on Thr-166 and Thr-289. This phosphorylation is gbpC-dependent.

It carries out the reaction L-seryl-[myosin light chain] + ATP = O-phospho-L-seryl-[myosin light chain] + ADP + H(+). It catalyses the reaction L-threonyl-[myosin light chain] + ATP = O-phospho-L-threonyl-[myosin light chain] + ADP + H(+). Possesses an autoinhibitory domain. Autophosphorylation appears to increase the enzymatic activity. Activation is gbdC-dependent. Does not have a calmodulin-binding domain. Functionally, phosphorylates a specific serine in the N-terminus of a myosin light chain. Phosphorylates regulatory myosin light chain (mlcR) during chemotaxis. mlcR phosphorylation increases the motility and actin-activated ATPase activity of myosin, contributing to chemotaxis. The chain is Myosin light chain kinase A (mlkA) from Dictyostelium discoideum (Social amoeba).